A 556-amino-acid polypeptide reads, in one-letter code: Optineurin (556 aa).

The segment at Met1–Ser33 is disordered. Basic and acidic residues predominate over residues Glu11–Asn22. Positions Glu38–Ala164 form a coiled coil. The LIR motif lies at Asp168 to Ile173. Positions Val219–Asp487 form a coiled coil. The tract at residues Glu245–Ile274 is disordered. Positions Glu253–Asn265 are enriched in polar residues. The short motif at Asp453 to Arg458 is the UBAN element. Positions Met496 to Pro524 are disordered. A CCHC NOA-type zinc finger spans residues Gln526–Asn556. Residues Cys534, Cys537, His550, and Cys554 each contribute to the Zn(2+) site.

As to quaternary structure, binds to linear ubiquitin chains. Interacts with LC3 family members. In terms of tissue distribution, expressed in erythrocytes, skeletal muscle, heart, spleen and brain. Weakly expressed in lung and liver (at protein level).

The protein localises to the cytoplasm. It localises to the perinuclear region. It is found in the golgi apparatus. Its subcellular location is the trans-Golgi network. The protein resides in the cytoplasmic vesicle. The protein localises to the recycling endosome. It localises to the autophagosome. In terms of biological role, probably part of the TNF-alpha signaling pathway that can shift the equilibrium toward induction of cell death. May act by regulating membrane trafficking and cellular morphogenesis. May act as autophagy receptor that interacts directly with both the cargo to become degraded and an autophagy modifier of the MAP1 LC3 family. In Gallus gallus (Chicken), this protein is Optineurin (OPTN).